A 508-amino-acid chain; its full sequence is MKYRDLRDFIAALEARGELTRVTAEVDPYLEITEICDRTLRAGGPALLFENVKGHAMPLLGNLFGTPERVALGMGQDSTAALREVGELLAFLKEPEPPKGFRDAWEKLPIFKQAMSMGPKTLRKAPCQEVILEGDDVDLDRLPIQHCWPGDVAPLVTWSLVVTKGPNKTRQNLGIYRQQKLGKNRLIMRWLSHRGGALDFQEWQSAHPGEPFPVAVALGADPATILGAVTPVPDNLSEYAFAGLLRGSRTELVKCGHADLEVPASSEIVLEGYIYPDDTAPEGPYGDHTGYYNEVETFPVFTVERITHRRDPIYHSTYTGRPPDEPAILGLALNEVFVPILRKQFPEIVDFYLPPEGCSYRMAVVTMKKQYPGHAKRVMMGVWSFLRQFMYTKFVIVLDDDVDARNWEDVIWAITTRMDPARDTVMVENTPIDYLDFASPTAGLGSKMGLDATTKWAGETQREWGTPIVMDEAVKRRVDERWGEYGIATPPPPPRHSPPSDERGHDDV.

N172 provides a ligand contact to Mn(2+). Residues I175 to R177, R189 to L191, and R194 to G195 each bind prenylated FMN. E238 serves as a coordination point for Mn(2+). Residue D287 is the Proton donor of the active site. The interval G483–V508 is disordered. Over residues P498–V508 the composition is skewed to basic and acidic residues.

Belongs to the UbiD family. As to quaternary structure, homohexamer. It depends on prenylated FMN as a cofactor. Requires Mn(2+) as cofactor.

It is found in the cell membrane. It carries out the reaction a 4-hydroxy-3-(all-trans-polyprenyl)benzoate + H(+) = a 2-(all-trans-polyprenyl)phenol + CO2. The protein operates within cofactor biosynthesis; ubiquinone biosynthesis. In terms of biological role, catalyzes the decarboxylation of 3-octaprenyl-4-hydroxy benzoate to 2-octaprenylphenol, an intermediate step in ubiquinone biosynthesis. This chain is 3-octaprenyl-4-hydroxybenzoate carboxy-lyase, found in Chromohalobacter salexigens (strain ATCC BAA-138 / DSM 3043 / CIP 106854 / NCIMB 13768 / 1H11).